The chain runs to 406 residues: Sorting nexin-6 (406 aa).

The residue at position 1 (M1) is an N-acetylmethionine. At M2 the chain carries N-acetylmethionine; in Sorting nexin-6, N-terminally processed. Residues M2–N179 are interaction with PIM1. One can recognise a PX domain in the interval L26 to L173. A 1,2-diacyl-sn-glycero-3-phospho-(1D-myo-inositol-4,5-bisphosphate)-binding positions include S41–K47, F100–K106, and E114–M117. Phosphoserine is present on residues S116 and S194. The tract at residues E182–I199 is membrane-binding amphipathic helix. Residues V203–T406 enclose the BAR domain.

Belongs to the sorting nexin family. In terms of assembly, forms heterodimers with BAR domain-containing sorting nexins SNX1 and SNX2. The heterodimers are proposed to self-assemble into helical arrays on the membrane to stabilize and expand local membrane curvature underlying endosomal tubule formation. Thought to be a component of the originally described retromer complex (also called SNX-BAR retromer) which is a pentamer containing the heterotrimeric retromer cargo-selective complex (CSC), also described as vacuolar protein sorting subcomplex (VPS), and a heterodimeric membrane-deforming subcomplex formed between SNX1 or SNX2 and SNX5 or SNX6 (also called SNX-BAR subcomplex); the respective CSC and SNX-BAR subcomplexes associate with low affinity. Interacts with SNX1, SNX2, VPS26A, VPS29, VPS35, CDKN1B, TGFB receptors, BACE1, BRMS1, PIP5K1C isoform 3. Interacts with DCTN1; the association with DCTN1 is involved in movement of retromer-c ontaining vesicles toward the TGN. Interacts with CDKN1B and GIT1. Interacts with PIM1; translocating SNX6 to the nucleus. In terms of processing, in vitro phosphorylated by PIM1; not affecting PIM1-dependent nuclear translocation.

The protein localises to the early endosome. It is found in the early endosome membrane. Its subcellular location is the cytoplasmic vesicle. The protein resides in the cytoplasm. It localises to the nucleus. In terms of biological role, involved in several stages of intracellular trafficking. Interacts with membranes phosphatidylinositol 3,4-bisphosphate and/or phosphatidylinositol 4,5-bisphosphate. Acts in part as component of the retromer membrane-deforming SNX-BAR subcomplex. The SNX-BAR retromer mediates retrograde transport of cargo proteins from endosomes to the trans-Golgi network (TGN) and is involved in endosome-to-plasma membrane transport for cargo protein recycling. The SNX-BAR subcomplex functions to deform the donor membrane into a tubular profile called endosome-to-TGN transport carrier (ETC). Does not have in vitro vesicle-to-membrane remodeling activity. Involved in retrograde endosome-to-TGN transport of lysosomal enzyme receptor IGF2R. May function as link between transport vesicles and dynactin. Negatively regulates retrograde transport of BACE1 from the cell surface to the trans-Golgi network. Involved in E-cadherin sorting and degradation; inhibits PIP5K1C isoform 3-mediated E-cadherin degradation. In association with GIT1 involved in EGFR degradation. Promotes lysosomal degradation of CDKN1B. May contribute to transcription regulation. The chain is Sorting nexin-6 (SNX6) from Homo sapiens (Human).